Reading from the N-terminus, the 343-residue chain is L-threonine 3-dehydrogenase (343 aa).

C38 serves as a coordination point for Zn(2+). Residues T40 and H43 each act as charge relay system in the active site. Zn(2+) contacts are provided by H63, E64, C93, C96, C99, and C107. NAD(+)-binding positions include I175, D195, R200, 262–264, and 286–287; these read LGI and IY.

It belongs to the zinc-containing alcohol dehydrogenase family. Homotetramer. Zn(2+) is required as a cofactor.

The protein localises to the cytoplasm. It catalyses the reaction L-threonine + NAD(+) = (2S)-2-amino-3-oxobutanoate + NADH + H(+). It participates in amino-acid degradation; L-threonine degradation via oxydo-reductase pathway; glycine from L-threonine: step 1/2. In terms of biological role, catalyzes the NAD(+)-dependent oxidation of L-threonine to 2-amino-3-ketobutyrate. This is L-threonine 3-dehydrogenase from Paraburkholderia xenovorans (strain LB400).